We begin with the raw amino-acid sequence, 579 residues long: Leucine-rich repeat-containing protein 15 (579 aa).

The first 21 residues, 1–21, serve as a signal peptide directing secretion; it reads MPLKHYLLLLVSCQAWAAGLA. In terms of domain architecture, LRRNT spans 22–53; that stretch reads YYGCPSECTCSRASQVECTGAQIVAMPSPLPW. Over 22–536 the chain is Extracellular; that stretch reads YYGCPSECTC…TWGMTDAQSG (515 aa). LRR repeat units lie at residues 54–75, 78–99, 102–123, 126–147, 150–171, 174–195, 198–219, 222–243, 246–267, 270–291, 294–315, 318–339, 342–363, 366–387, and 390–411; these read NAMS…KFLN, ALIA…AFRN, SLRH…LFQD, NLET…QFSQ, NLKE…VFDH, GLTK…VFQH, NLQV…TFDA, NLQE…LFHN, NLQR…IFMQ, HLNK…VFGP, NLRE…AFSH, QLQV…AFNG, NLRE…VFRS, NLRN…IFAN, and GLMT…IFDH. A glycan (N-linked (GlcNAc...) asparagine) is linked at N75. N369 is a glycosylation site (N-linked (GlcNAc...) asparagine). The 51-residue stretch at 423 to 473 folds into the LRRCT domain; it reads NPWRCDSNILPLHDWLILNRARLGTDTLPVCSSPASVRGQSLVIINVNFPG. The segment at 476–509 is disordered; sequence VQGPETPEVSSYPDTSSYPDSTSISSTTEITRST. A compositionally biased stretch (low complexity) spans 485–506; the sequence is SSYPDTSSYPDSTSISSTTEIT. The helical transmembrane segment at 537–557 threads the bilayer; it reads LAIAAIVIGIIALACSLAACI. Over 558-579 the chain is Cytoplasmic; that stretch reads CCCCCKKRSQAVLMQMKAPNEC.

Expressed in chodrocytes (at protein level).

Its subcellular location is the cell membrane. The sequence is that of Leucine-rich repeat-containing protein 15 (Lrrc15) from Mus musculus (Mouse).